The sequence spans 146 residues: Large ribosomal subunit protein uL15 (146 aa).

Basic and acidic residues predominate over residues 1 to 13 (MKLHELKPSEGSR). Residues 1-57 (MKLHELKPSEGSRKTRNRVGRGIGSGNGKTAGKGHKGQNARSGGGVRPGFEGGQMPL) form a disordered region. Gly residues-rich tracts occupy residues 21–31 (RGIGSGNGKTA) and 42–52 (SGGGVRPGFEG).

It belongs to the universal ribosomal protein uL15 family. In terms of assembly, part of the 50S ribosomal subunit.

Its function is as follows. Binds to the 23S rRNA. This Bacillus subtilis (strain 168) protein is Large ribosomal subunit protein uL15.